The chain runs to 545 residues: CTP synthase (545 aa).

The segment at 1-266 (MATNYIFVTG…DTFVCDRFRL (266 aa)) is amidoligase domain. Residue Ser-14 coordinates CTP. Ser-14 contributes to the UTP binding site. ATP-binding positions include 15 to 20 (SLGKGI) and Asp-72. Mg(2+)-binding residues include Asp-72 and Glu-140. CTP contacts are provided by residues 147 to 149 (DIE), 187 to 192 (KTKPTQ), and Lys-223. UTP-binding positions include 187–192 (KTKPTQ) and Lys-223. 239 to 241 (KDV) lines the ATP pocket. The Glutamine amidotransferase type-1 domain maps to 291 to 542 (TIGMVGKYVE…VAAAKAYQDS (252 aa)). Gly-352 provides a ligand contact to L-glutamine. Cys-379 acts as the Nucleophile; for glutamine hydrolysis in catalysis. L-glutamine contacts are provided by residues 380-383 (LGMQ), Glu-403, and Arg-470. Catalysis depends on residues His-515 and Glu-517.

It belongs to the CTP synthase family. As to quaternary structure, homotetramer.

The catalysed reaction is UTP + L-glutamine + ATP + H2O = CTP + L-glutamate + ADP + phosphate + 2 H(+). It catalyses the reaction L-glutamine + H2O = L-glutamate + NH4(+). It carries out the reaction UTP + NH4(+) + ATP = CTP + ADP + phosphate + 2 H(+). It functions in the pathway pyrimidine metabolism; CTP biosynthesis via de novo pathway; CTP from UDP: step 2/2. With respect to regulation, allosterically activated by GTP, when glutamine is the substrate; GTP has no effect on the reaction when ammonia is the substrate. The allosteric effector GTP functions by stabilizing the protein conformation that binds the tetrahedral intermediate(s) formed during glutamine hydrolysis. Inhibited by the product CTP, via allosteric rather than competitive inhibition. Functionally, catalyzes the ATP-dependent amination of UTP to CTP with either L-glutamine or ammonia as the source of nitrogen. Regulates intracellular CTP levels through interactions with the four ribonucleotide triphosphates. This is CTP synthase from Actinobacillus pleuropneumoniae serotype 5b (strain L20).